Consider the following 313-residue polypeptide: MKLTDSVLRSFRVAKVFRENSDKINCFDFSPNGETVISSSDDDSIVLYDCQEGKPKRTLYSKKYGVDLIRYTHAANTVVYSSNKIDDTIRYLSLHDNKYIRYFPGHSKRVVALSMSPVDDTFISGSLDKTIRLWDLRSPNCQGLMHLQGKPVCSFDPEGLIFAAGVNSEMVKLYDLRSFDKGPFATFKMQYDRTCEWTGLKFSNDGKLILISTNGSFIRLIDAFKGVVMHTFGGYANSKAVTLEASFTPDSQFIMIGSEDGKIHVWNGESGIKVAVLDGKHTGPITCLQFNPKFMTFASACSNMAFWLPTIDD.

WD repeat units follow at residues 19 to 58, 105 to 144, 146 to 184, 192 to 231, 236 to 276, and 280 to 313; these read ENSDKINCFDFSPNGETVISSSDDDSIVLYDCQEGKPKRT, GHSKRVVALSMSPVDDTFISGSLDKTIRLWDLRSPNCQGL, HLQGKPVCSFDPEGLIFAAGVNSEMVKLYDLRSFDKGPF, DRTCEWTGLKFSNDGKLILISTNGSFIRLIDAFKGVVMHT, ANSK…KVAV, and KHTGPITCLQFNPKFMTFASACSNMAFWLPTIDD.

Belongs to the WD repeat SWD2 family. In terms of assembly, component of the SET1/COMPASS complex, at least composed of the catalytic subunit (SETD1A or SETD1B), WDR5, WDR82, RBBP5, ASH2L/ASH2, CXXC1/CFP1, HCFC1 and DPY30. Component of the PNUTS-PP1 phosphatase complex, composed of PPP1R10/PNUTS, TOX4, WDR82, and PPP1CA or PPP1CB or PPP1CC. Associated with multiple protein complexes including an RNA polymerase II complex, MLL3/MLL4 complex and a chaperonin-containing TCP1 complex. Interacts with SETD1B (via N-terminal region); the interaction is direct. Interacts with SETD1A (via N-terminal region); the interaction is direct. Interacts with CUL4B. Interacts with RBBP5. Interacts with POLR2B. Interacts with hyperphosphorylated C-terminal domain (CTD) of RNA polymerase II large subunit (POLR2A). Binds specifically to CTD heptad repeats phosphorylated on 'Ser-5' of each heptad. SETD1A enhances its interaction with POLR2A. Interacts with PPP1R10/PNUTS. Interacts with PPP1CA in the presence of PPP1R10/PNUTS. Interacts with ZC3H4; interaction is independent of the SET1 complex and promotes transcription termination of long non-coding RNAs (lncRNAs).

It is found in the nucleus. Its subcellular location is the chromosome. The protein localises to the cytoplasm. In terms of biological role, regulatory component of the SET1/COMPASS complex implicated in the tethering of this complex to transcriptional start sites of active genes. Facilitates histone H3 'Lys-4' methylation (H3K4me) via recruitment of the SETD1A or SETD1B to the 'Ser-5' phosphorylated C-terminal domain (CTD) of RNA polymerase II large subunit (POLR2A). Component of the PNUTS-PP1 protein phosphatase complex, a protein phosphatase 1 (PP1) complex that promotes RNA polymerase II transcription pause-release, allowing transcription elongation. PNUTS-PP1 also plays a role in the control of chromatin structure and cell cycle progression during the transition from mitosis into interphase. Together with ZC3H4, but independently of the SET1 complex, part of a transcription termination checkpoint that promotes transcription termination of long non-coding RNAs (lncRNAs). The transcription termination checkpoint is activated by the inefficiently spliced first exon of lncRNAs and promotes transcription termination of lncRNAs and their subsequent degradation by the exosome. The sequence is that of WD repeat-containing protein 82 from Homo sapiens (Human).